The primary structure comprises 95 residues: Large ribosomal subunit protein bL21 (95 aa).

It belongs to the bacterial ribosomal protein bL21 family. As to quaternary structure, part of the 50S ribosomal subunit. Contacts protein L20.

This protein binds to 23S rRNA in the presence of protein L20. This is Large ribosomal subunit protein bL21 from Rubrobacter xylanophilus (strain DSM 9941 / JCM 11954 / NBRC 16129 / PRD-1).